A 443-amino-acid chain; its full sequence is F-box only protein 39 (443 aa).

An F-box domain is found at 16-61 (WATLPDVCLRRVFWWLGDRDRSRAALVCRKWNQMMYSADLWRYRTI).

Directly interacts with SKP1 and CUL1.

Its function is as follows. Substrate-recognition component of the SCF (SKP1-CUL1-F-box protein)-type E3 ubiquitin ligase complex. The sequence is that of F-box only protein 39 (FBXO39) from Bos taurus (Bovine).